The chain runs to 524 residues: Cytokinin dehydrogenase 7 (524 aa).

An N-terminal signal peptide occupies residues 1 to 22 (MAARCSIAFMIMASCLSVVVSG). An N-linked (GlcNAc...) asparagine glycan is attached at asparagine 42. One can recognise an FAD-binding PCMH-type domain in the interval 55–233 (VAAAPEAVLH…TRARIGLMPA (179 aa)). Residues glycine 91 and glycine 93 each coordinate FAD. Histidine 94 bears the Pros-8alpha-FAD histidine mark. Serine 95 and glutamine 99 together coordinate FAD. Asparagine 121 carries N-linked (GlcNAc...) asparagine glycosylation. 5 residues coordinate FAD: aspartate 157, threonine 162, serine 168, isoleucine 172, and isoleucine 223. Residues asparagine 277 and asparagine 320 are each glycosylated (N-linked (GlcNAc...) asparagine). FAD is bound by residues tyrosine 472, serine 507, and glutamine 510.

Belongs to the oxygen-dependent FAD-linked oxidoreductase family. Monomer. The cofactor is FAD.

The protein localises to the secreted. Its subcellular location is the extracellular space. It carries out the reaction N(6)-dimethylallyladenine + A + H2O = 3-methyl-2-butenal + adenine + AH2. Functionally, catalyzes the oxidation of cytokinins, a family of N(6)-substituted adenine derivatives that are plant hormones, where the substituent is an isopentenyl group. This is Cytokinin dehydrogenase 7 (CKX7) from Oryza sativa subsp. japonica (Rice).